The following is a 617-amino-acid chain: MAAVAAGGLVGKGRDISLAALQRHDPYINRIVDVASQVALYTFGHRANEWEKTDVEGTLFVYTRSASPKHGFTIMNRLSMENRTEPITKDLDFQLQDPFLLYRNARLSIYGIWFYDKEECQRIAELMKNLTQYEQLKAHQGTGAGISPVILNSGEGKEVDILRMLIKAKDEYTKCKTCSEPKKITSSSAIYDNPNLIKPIPVKPSENQQQRIPQPNQTLDPEPQHLSLTALFGKQDKATCQETVEPPQTLHQQQQQQQQQQEKLPIRQGVVRSLSYEEPRRHSPPIEKQLCPAIQKLMVRSADLHPLSELPENRPCENGSTHSAGEFFTGPVQPGSPHNIGTSRGVQNASRTQNLFEKLQSTPGAANKCDPSTPAPASSAALNRSRAPTSVTPVAPGKGLAQPPQAYFNGSLPPQTVGHQAHGREQSTLPRQTLPISGSQTGSSGVISPQELLKKLQIVQQEQQLHASNRPALAAKFPVLAQSSGTGKPLESWINKTPNTEQQTPLFQVISPQRIPATAAPSLLMSPMVFAQPTSVPPKERESGLLPVGGQEPPAAATSLLLPIQSPEPSVITSSPLTKLQLQEALLYLIQNDDNFLNIIYEAYLFSMTQAAMKKTM.

Alanine 2 bears the N-acetylalanine mark. The residue at position 147 (serine 147) is a Phosphoserine. A Phosphotyrosine modification is found at tyrosine 191. Disordered stretches follow at residues 195 to 222 and 243 to 266; these read NLIKPIPVKPSENQQQRIPQPNQTLDPE and TVEPPQTLHQQQQQQQQQQEKLPI. The segment covering 205–219 has biased composition (polar residues); the sequence is SENQQQRIPQPNQTL. The segment covering 252-261 has biased composition (low complexity); it reads QQQQQQQQQQ. Residues serine 275 and serine 336 each carry the phosphoserine modification. Residues 362 to 426 are disordered; sequence TPGAANKCDP…VGHQAHGREQ (65 aa). Residues 371 to 381 show a composition bias toward low complexity; that stretch reads PSTPAPASSAA. Threonine 392 is modified (phosphothreonine). Phosphoserine occurs at positions 448 and 511.

Belongs to the DCP1 family. Interacts with DCP1A. In terms of assembly, (Microbial infection) Interacts with rotavirus A non-structural protein 2; this interaction probably plays a role in the sequestration of DCP1B in viral factories. Interacts with rotavirus A non-structural protein 5; this interaction probably plays a role in its sequestration in viral factories.

The protein resides in the cytoplasm. It is found in the nucleus. The catalysed reaction is a 5'-end (N(7)-methyl 5'-triphosphoguanosine)-ribonucleoside in mRNA + H2O = N(7)-methyl-GDP + a 5'-end phospho-ribonucleoside in mRNA + 2 H(+). May play a role in the degradation of mRNAs, both in normal mRNA turnover and in nonsense-mediated mRNA decay. May remove the 7-methyl guanine cap structure from mRNA molecules, yielding a 5'-phosphorylated mRNA fragment and 7m-GDP. In Homo sapiens (Human), this protein is mRNA-decapping enzyme 1B (DCP1B).